A 313-amino-acid polypeptide reads, in one-letter code: Adhesin MafA 1/2 (313 aa).

Positions 1–14 (MKTLLLLIPLVLTA) are cleaved as a signal peptide. The N-palmitoyl cysteine moiety is linked to residue C15. The S-diacylglycerol cysteine moiety is linked to residue C15. The segment covering 282–298 (GDTTAQNRPDFKQNNGK) has biased composition (polar residues). Residues 282–313 (GDTTAQNRPDFKQNNGKNPDVGNEVIRRRKGG) are disordered.

It belongs to the MafA family.

The protein localises to the cell outer membrane. In Neisseria meningitidis serogroup C (strain 053442), this protein is Adhesin MafA 1/2 (mafA1).